The following is a 453-amino-acid chain: MSLNVVILAAGKGTRMRSSLPKVLHPVANKPMVSHVIETARKVGAEQLHLVYGHGAELLKERIQASDLNWVLQAQQLGTGHAVAQAIPFWQDEDDVLVLYGDTPLIQPETLQRLLAAKASDGMALLTVVLDNPTGYGRIVRSNGQVVGIVEQKDANAEQLAIREVNTGVLVANGGQLRSWLSRLDNKNAQGEFYLTDVIAMAHADNCPIAAVHPDDAMEVEGANNRVQLAQLERSYQKMQAERLMIAGATLIDPARFDLRGTLEIGEEVVIDVNVIIEGKVVLGNHVRIGAGSVLKDCVIGDHSEVKPYSVIEGAQIADQCSVGPFTRLRPGTVLEQDAHVGNFVEMKKARLGVGSKCGHLTYLGDAEVGAKVNIGAGTITCNYDGVNKFQTIIEDDVFVGSDTQLVAPVRIGKGATLGAGSTITKDVAENELVITRVPQRHIQNWARPVKKK.

The segment at 1–226 is pyrophosphorylase; the sequence is MSLNVVILAA…AMEVEGANNR (226 aa). Residues 8-11, Lys22, Gln73, 78-79, 100-102, Gly137, Glu151, Asn166, and Asn224 contribute to the UDP-N-acetyl-alpha-D-glucosamine site; these read LAAG, GT, and YGD. Asp102 serves as a coordination point for Mg(2+). Asn224 contributes to the Mg(2+) binding site. Residues 227–247 are linker; the sequence is VQLAQLERSYQKMQAERLMIA. Residues 248 to 453 form an N-acetyltransferase region; that stretch reads GATLIDPARF…QNWARPVKKK (206 aa). Residues Arg330 and Lys348 each coordinate UDP-N-acetyl-alpha-D-glucosamine. His360 serves as the catalytic Proton acceptor. Positions 363 and 374 each coordinate UDP-N-acetyl-alpha-D-glucosamine. Acetyl-CoA contacts are provided by residues Ala377, 383–384, Ser402, Ala420, and Arg437; that span reads NY.

This sequence in the N-terminal section; belongs to the N-acetylglucosamine-1-phosphate uridyltransferase family. The protein in the C-terminal section; belongs to the transferase hexapeptide repeat family. As to quaternary structure, homotrimer. The cofactor is Mg(2+).

The protein resides in the cytoplasm. The enzyme catalyses alpha-D-glucosamine 1-phosphate + acetyl-CoA = N-acetyl-alpha-D-glucosamine 1-phosphate + CoA + H(+). It catalyses the reaction N-acetyl-alpha-D-glucosamine 1-phosphate + UTP + H(+) = UDP-N-acetyl-alpha-D-glucosamine + diphosphate. Its pathway is nucleotide-sugar biosynthesis; UDP-N-acetyl-alpha-D-glucosamine biosynthesis; N-acetyl-alpha-D-glucosamine 1-phosphate from alpha-D-glucosamine 6-phosphate (route II): step 2/2. The protein operates within nucleotide-sugar biosynthesis; UDP-N-acetyl-alpha-D-glucosamine biosynthesis; UDP-N-acetyl-alpha-D-glucosamine from N-acetyl-alpha-D-glucosamine 1-phosphate: step 1/1. It functions in the pathway bacterial outer membrane biogenesis; LPS lipid A biosynthesis. Functionally, catalyzes the last two sequential reactions in the de novo biosynthetic pathway for UDP-N-acetylglucosamine (UDP-GlcNAc). The C-terminal domain catalyzes the transfer of acetyl group from acetyl coenzyme A to glucosamine-1-phosphate (GlcN-1-P) to produce N-acetylglucosamine-1-phosphate (GlcNAc-1-P), which is converted into UDP-GlcNAc by the transfer of uridine 5-monophosphate (from uridine 5-triphosphate), a reaction catalyzed by the N-terminal domain. In Aeromonas hydrophila subsp. hydrophila (strain ATCC 7966 / DSM 30187 / BCRC 13018 / CCUG 14551 / JCM 1027 / KCTC 2358 / NCIMB 9240 / NCTC 8049), this protein is Bifunctional protein GlmU.